Here is a 257-residue protein sequence, read N- to C-terminus: tRNA pseudouridine synthase A (257 aa).

The active-site Nucleophile is the D43. Y94 provides a ligand contact to substrate.

This sequence belongs to the tRNA pseudouridine synthase TruA family.

The enzyme catalyses uridine(38/39/40) in tRNA = pseudouridine(38/39/40) in tRNA. Functionally, formation of pseudouridine at positions 38, 39 and 40 in the anticodon stem and loop of transfer RNAs. The polypeptide is tRNA pseudouridine synthase A (Pyrobaculum arsenaticum (strain DSM 13514 / JCM 11321 / PZ6)).